Reading from the N-terminus, the 343-residue chain is N-acetyl-gamma-glutamyl-phosphate reductase (343 aa).

Cysteine 147 is an active-site residue.

Belongs to the NAGSA dehydrogenase family. Type 1 subfamily.

It localises to the cytoplasm. It catalyses the reaction N-acetyl-L-glutamate 5-semialdehyde + phosphate + NADP(+) = N-acetyl-L-glutamyl 5-phosphate + NADPH + H(+). It functions in the pathway amino-acid biosynthesis; L-arginine biosynthesis; N(2)-acetyl-L-ornithine from L-glutamate: step 3/4. Functionally, catalyzes the NADPH-dependent reduction of N-acetyl-5-glutamyl phosphate to yield N-acetyl-L-glutamate 5-semialdehyde. The polypeptide is N-acetyl-gamma-glutamyl-phosphate reductase (Listeria monocytogenes serotype 4b (strain CLIP80459)).